A 122-amino-acid polypeptide reads, in one-letter code: MSKRRQERMSVEIMRVLSQIIQEEIKDPRIEFKNLSITRIDLSNDYSHARVNISILGDEIQREEAMKALQKAKGYIRSALAQQLKVRHAPELEFRLDRSIEHGIRISSLLEEIKEEAKGSNE.

It belongs to the RbfA family. In terms of assembly, monomer. Binds 30S ribosomal subunits, but not 50S ribosomal subunits or 70S ribosomes.

It is found in the cytoplasm. Its function is as follows. One of several proteins that assist in the late maturation steps of the functional core of the 30S ribosomal subunit. Associates with free 30S ribosomal subunits (but not with 30S subunits that are part of 70S ribosomes or polysomes). Required for efficient processing of 16S rRNA. May interact with the 5'-terminal helix region of 16S rRNA. This Syntrophomonas wolfei subsp. wolfei (strain DSM 2245B / Goettingen) protein is Ribosome-binding factor A.